Consider the following 259-residue polypeptide: DNA-directed RNA polymerase subunit Rpo3 (259 aa).

It belongs to the archaeal Rpo3/eukaryotic RPB3 RNA polymerase subunit family. As to quaternary structure, part of the RNA polymerase complex.

Its subcellular location is the cytoplasm. It carries out the reaction RNA(n) + a ribonucleoside 5'-triphosphate = RNA(n+1) + diphosphate. Functionally, DNA-dependent RNA polymerase (RNAP) catalyzes the transcription of DNA into RNA using the four ribonucleoside triphosphates as substrates. The chain is DNA-directed RNA polymerase subunit Rpo3 from Pyrococcus horikoshii (strain ATCC 700860 / DSM 12428 / JCM 9974 / NBRC 100139 / OT-3).